The following is a 207-amino-acid chain: Dephospho-CoA kinase (207 aa).

Residues 11-207 (RIGLTGGIAS…LLKMSPTAEL (197 aa)) enclose the DPCK domain. 19–24 (ASGKSS) is an ATP binding site.

Belongs to the CoaE family.

The protein localises to the cytoplasm. The enzyme catalyses 3'-dephospho-CoA + ATP = ADP + CoA + H(+). It functions in the pathway cofactor biosynthesis; coenzyme A biosynthesis; CoA from (R)-pantothenate: step 5/5. Functionally, catalyzes the phosphorylation of the 3'-hydroxyl group of dephosphocoenzyme A to form coenzyme A. The sequence is that of Dephospho-CoA kinase from Synechococcus sp. (strain CC9605).